The sequence spans 80 residues: Large ribosomal subunit protein bL31B (80 aa).

The protein belongs to the bacterial ribosomal protein bL31 family. Type B subfamily. In terms of assembly, part of the 50S ribosomal subunit.

The sequence is that of Large ribosomal subunit protein bL31B from Xanthomonas axonopodis pv. citri (strain 306).